The chain runs to 374 residues: Ribosomal RNA large subunit methyltransferase G (374 aa).

This sequence belongs to the methyltransferase superfamily. RlmG family.

Its subcellular location is the cytoplasm. The enzyme catalyses guanosine(1835) in 23S rRNA + S-adenosyl-L-methionine = N(2)-methylguanosine(1835) in 23S rRNA + S-adenosyl-L-homocysteine + H(+). In terms of biological role, specifically methylates the guanine in position 1835 (m2G1835) of 23S rRNA. The protein is Ribosomal RNA large subunit methyltransferase G of Pseudomonas fluorescens (strain ATCC BAA-477 / NRRL B-23932 / Pf-5).